Consider the following 29-residue polypeptide: Cycloviolacin-H2 (29 aa).

The cyclopeptide (Ser-Asn) cross-link spans S1–N29. 3 cysteine pairs are disulfide-bonded: C5-C19, C9-C21, and C14-C26.

This is a cyclic peptide.

Probably participates in a plant defense mechanism. This chain is Cycloviolacin-H2, found in Viola hederacea (Australian violet).